A 249-amino-acid chain; its full sequence is Cell division protein DivIB (249 aa).

Topologically, residues 1 to 19 (MKEENEYIVKRRKKRRRKR) are cytoplasmic. A helical membrane pass occupies residues 20–40 (ITIFLFLLICILVTLCLKLPY). One can recognise a POTRA domain in the interval 41–109 (FNIKYINVEG…NTIDIIVKER (69 aa)). The Extracellular segment spans residues 41–249 (FNIKYINVEG…KGNPVYSLQQ (209 aa)).

It belongs to the FtsQ/DivIB family. DivIB subfamily.

It is found in the cell membrane. Functionally, cell division protein that may be involved in stabilizing or promoting the assembly of the division complex. The sequence is that of Cell division protein DivIB from Clostridium acetobutylicum (strain ATCC 824 / DSM 792 / JCM 1419 / IAM 19013 / LMG 5710 / NBRC 13948 / NRRL B-527 / VKM B-1787 / 2291 / W).